We begin with the raw amino-acid sequence, 280 residues long: Gem-associated protein 2 (280 aa).

Positions 1 to 39 (MRRAELAGLKTMAWVPAESAVEELMPRLLPVEPCDLTEG) are may play a minor inhibitory role in snRNA binding to 5Sm (SNRPD1, SNRPD2, SNRPE, SNRPF and SNRPG) during snRNP assembly by inserting into the RNA binding pocket of 5Sm. Phosphoserine occurs at positions 81 and 166.

This sequence belongs to the gemin-2 family. Monomer. Part of the core SMN complex that contains SMN1, GEMIN2/SIP1, DDX20/GEMIN3, GEMIN4, GEMIN5, GEMIN6, GEMIN7, GEMIN8 and STRAP/UNRIP. Part of the SMN-Sm complex that contains SMN1, GEMIN2/SIP1, DDX20/GEMIN3, GEMIN4, GEMIN5, GEMIN6, GEMIN7, GEMIN8, STRAP/UNRIP and the Sm proteins SNRPB, SNRPD1, SNRPD2, SNRPD3, SNRPE, SNRPF and SNRPG. Interacts with GEMIN5; the interaction is direct. Interacts (via C-terminus) with SMN1; the interaction is direct. Interacts with SNRPD1; the interaction is direct. Interacts with SNRPD2; the interaction is direct. Interacts (via N-terminus) with SNRPF; the interaction is direct. Interacts (via N-terminus) with SNRPE; the interaction is direct. Interacts (via N-terminus) with SNRPG; the interaction is direct.

It localises to the nucleus. Its subcellular location is the gem. The protein localises to the cytoplasm. Functionally, the SMN complex catalyzes the assembly of small nuclear ribonucleoproteins (snRNPs), the building blocks of the spliceosome, and thereby plays an important role in the splicing of cellular pre-mRNAs. Most spliceosomal snRNPs contain a common set of Sm proteins SNRPB, SNRPD1, SNRPD2, SNRPD3, SNRPE, SNRPF and SNRPG that assemble in a heptameric protein ring on the Sm site of the small nuclear RNA to form the core snRNP (Sm core). In the cytosol, the Sm proteins SNRPD1, SNRPD2, SNRPE, SNRPF and SNRPG (5Sm) are trapped in an inactive 6S pICln-Sm complex by the chaperone CLNS1A that controls the assembly of the core snRNP. To assemble core snRNPs, the SMN complex accepts the trapped 5Sm proteins from CLNS1A. Binding of snRNA inside 5Sm ultimately triggers eviction of the SMN complex, thereby allowing binding of SNRPD3 and SNRPB to complete assembly of the core snRNP. Within the SMN complex, GEMIN2 constrains the conformation of 5Sm, thereby promoting 5Sm binding to snRNA containing the snRNP code (a nonameric Sm site and a 3'-adjacent stem-loop), thus preventing progression of assembly until a cognate substrate is bound. In Homo sapiens (Human), this protein is Gem-associated protein 2.